The following is a 265-amino-acid chain: Cytochrome c oxidase subunit 3 (265 aa).

The next 7 helical transmembrane spans lie at 16–36 (PWPL…VMYM), 41–61 (GGGT…FVWW), 85–105 (GIIL…WAFF), 138–158 (LILL…LAGL), 162–182 (AVYA…FQGI), 200–220 (FFLA…FLII), and 242–262 (AFYW…IYWW).

Belongs to the cytochrome c oxidase subunit 3 family. In terms of assembly, component of the cytochrome c oxidase (complex IV, CIV), a multisubunit enzyme composed of a catalytic core of 3 subunits and several supernumerary subunits. The complex exists as a monomer or a dimer and forms supercomplexes (SCs) in the inner mitochondrial membrane with ubiquinol-cytochrome c oxidoreductase (cytochrome b-c1 complex, complex III, CIII).

The protein localises to the mitochondrion inner membrane. It carries out the reaction 4 Fe(II)-[cytochrome c] + O2 + 8 H(+)(in) = 4 Fe(III)-[cytochrome c] + 2 H2O + 4 H(+)(out). In terms of biological role, component of the cytochrome c oxidase, the last enzyme in the mitochondrial electron transport chain which drives oxidative phosphorylation. The respiratory chain contains 3 multisubunit complexes succinate dehydrogenase (complex II, CII), ubiquinol-cytochrome c oxidoreductase (cytochrome b-c1 complex, complex III, CIII) and cytochrome c oxidase (complex IV, CIV), that cooperate to transfer electrons derived from NADH and succinate to molecular oxygen, creating an electrochemical gradient over the inner membrane that drives transmembrane transport and the ATP synthase. Cytochrome c oxidase is the component of the respiratory chain that catalyzes the reduction of oxygen to water. Electrons originating from reduced cytochrome c in the intermembrane space (IMS) are transferred via the dinuclear copper A center (CU(A)) of subunit 2 and heme A of subunit 1 to the active site in subunit 1, a binuclear center (BNC) formed by heme A3 and copper B (CU(B)). The BNC reduces molecular oxygen to 2 water molecules using 4 electrons from cytochrome c in the IMS and 4 protons from the mitochondrial matrix. This Marchantia polymorpha (Common liverwort) protein is Cytochrome c oxidase subunit 3 (COX3).